Consider the following 574-residue polypeptide: Ankyrin repeat protein B18 (574 aa).

ANK repeat units lie at residues 56 to 87 (TGYT…DVTM), 135 to 164 (IKSR…DPNF), 167 to 213 (DGYT…NLNA), 217 to 249 (CGNT…NFKI), 253 to 285 (HGLT…NVGE), and 327 to 356 (EGKT…DINA). An F-box domain is found at 541–574 (NCLLTLLPSEIIYEILYMLTINDLYNISYPPTKV).

This is Ankyrin repeat protein B18 from Vaccinia virus (strain Ankara) (VACV).